The following is a 384-amino-acid chain: MSLLDLPTLWNASGVEALDSDLFEYFCCVASGSLPTFGHDATALRNILVRTALEGETASAAAVLQALLAFSSLHRYGLQPQALELKITALGSLAKGSFTPGLGTKETIEHIAAGMLLSSFEVHQSSCTSGHWTGYLGGVKTITDMSSVKTLLQFSSDVAVLLDWVHYHNVLARFSLLYWNGEETSEFPSTPTNLLSSQDSSLPPPIYSMMDLLSQICDLSNSAIPTGTSDEVDNYKGFLKVLDWRIRSLPIKGDNDGEMLLMKLYQLALLLFLNRSFEGLIDQPIRMQQQIGQAFAILPRLSSCRQQFPIYVIGCEARTDEQRAAVLDLITKTEKMSTSRSFNHCRTLLQAVWTQDDLAEWDDISYRAKLTLVISRCAVAPIFV.

The protein localises to the nucleus. Its function is as follows. Transcription factor; part of the gene cluster that mediates the biosynthesis of iso-A82775C, a enylepoxycyclohexane and biosynthetic precursor of the chloropestolide anticancer natural products. The chain is Transcription factor iacI from Pestalotiopsis fici (strain W106-1 / CGMCC3.15140).